Reading from the N-terminus, the 522-residue chain is Protein GDS1 (522 aa).

Disordered stretches follow at residues 56–88 (ALDD…PKKD), 222–268 (QQLE…SSNS), 300–391 (LSPS…SHNA), and 433–489 (STQT…SRNE). Over residues 62-73 (LAGSSFSSSQEI) the composition is skewed to polar residues. The span at 74 to 88 (KATKPKKDFGAPKKD) shows a compositional bias: basic and acidic residues. 4 stretches are compositionally biased toward polar residues: residues 222 to 236 (QQLE…FNSN), 244 to 260 (SSNQ…SMTD), 300 to 314 (LSPS…LLTP), and 355 to 366 (SQSLSVLSTPKK). The span at 368–378 (SSASLSTFASS) shows a compositional bias: low complexity. Residues 379 to 391 (KNISPDSSLSHNA) show a composition bias toward polar residues. Residues 439-467 (ESSSESSQYNSSSSSPVNSAAASSAESLS) show a composition bias toward low complexity. Over residues 468–489 (DINSSQDNGRESNPSSQESRNE) the composition is skewed to polar residues.

Functionally, involved in nuclear control of mitochondria. This is Protein GDS1 (GDS1) from Saccharomyces cerevisiae (strain ATCC 204508 / S288c) (Baker's yeast).